We begin with the raw amino-acid sequence, 850 residues long: Pentatricopeptide repeat-containing protein At3g49170, chloroplastic (850 aa).

Residues 1–50 constitute a chloroplast transit peptide; sequence MAMISFSFPSPAKLPIKSQPSVSNRINVADRLILRHLNAGDLRGAVSALD. 17 PPR repeats span residues 61–95, 96–130, 131–164, 165–199, 201–232, 233–267, 268–302, 303–334, 335–370, 372–406, 407–437, 438–472, 473–507, 508–538, 539–573, 574–609, and 610–640; these read DSVTFSSLLKSCIRARDFRLGKLVHARLIEFDIEP, DSVLYNSLISLYSKSGDSAKAEDVFETMRRFGKRD, VVSWSAMMACYGNNGRELDAIKVFVEFLELGLVP, NDYCYTAVIRACSNSDFVGVGRVTLGFLMKTGHFE, DVCVGCSLIDMFVKGENSFENAYKVFDKMSEL, NVVTWTLMITRCMQMGFPREAIRFFLDMVLSGFES, DKFTLSSVFSACAELENLSLGKQLHSWAIRSGLVD, DVECSLVDMYAKCSADGSVDDCRKVFDRMEDH, SVMSWTALITGYMKNCNLATEAINLFSEMITQGHVE, NHFTFSSAFKACGNLSDPRVGKQVLGQAFKRGLAS, NSSVANSVISMFVKSDRMEDAQRAFESLSEK, NLVSYNTFLDGTCRNLNFEQAFKLLSEITERELGV, SAFTFASLLSGVANVGSIRKGEQIHSQVVKLGLSC, NQPVCNALISMYSKCGSIDTASRVFNFMENR, NVISWTSMITGFAKHGFAIRVLETFNQMIEEGVKP, NEVTYVAILSACSHVGLVSEGWRHFNSMYEDHKIKP, and KMEHYACMVDLLCRAGLLTDAFEFINTMPFQ. The interval 645-720 is type E motif; the sequence is VWRTFLGACR…EGGCSWIEVG (76 aa). A type E(+) motif region spans residues 721-751; it reads DKIHKFYVGDTAHPNAHQIYDELDRLITEIK. The type DYW motif stretch occupies residues 752 to 850; it reads RCGYVPDTDL…DGKCSCNDYW (99 aa).

Belongs to the PPR family. PCMP-H subfamily.

It is found in the plastid. The protein resides in the chloroplast. Functionally, may play a role in embryogenesis. In Arabidopsis thaliana (Mouse-ear cress), this protein is Pentatricopeptide repeat-containing protein At3g49170, chloroplastic (EMB2261).